A 92-amino-acid chain; its full sequence is Small ribosomal subunit protein uS19 (92 aa).

It belongs to the universal ribosomal protein uS19 family.

In terms of biological role, protein S19 forms a complex with S13 that binds strongly to the 16S ribosomal RNA. This chain is Small ribosomal subunit protein uS19, found in Buchnera aphidicola subsp. Acyrthosiphon pisum (strain 5A).